The chain runs to 200 residues: Dephospho-CoA kinase (200 aa).

One can recognise a DPCK domain in the interval 4–200; sequence TIGLTGSVAT…TFIERFVNNK (197 aa). Position 12–17 (12–17) interacts with ATP; it reads ATGKST.

Belongs to the CoaE family.

The protein resides in the cytoplasm. It carries out the reaction 3'-dephospho-CoA + ATP = ADP + CoA + H(+). It participates in cofactor biosynthesis; coenzyme A biosynthesis; CoA from (R)-pantothenate: step 5/5. Functionally, catalyzes the phosphorylation of the 3'-hydroxyl group of dephosphocoenzyme A to form coenzyme A. In Listeria innocua serovar 6a (strain ATCC BAA-680 / CLIP 11262), this protein is Dephospho-CoA kinase.